The chain runs to 193 residues: Der GTPase-activating protein YihI (193 aa).

A compositionally biased stretch (basic residues) spans 1-12; it reads MSAKQPNRKPTG. 2 disordered regions span residues 1–91 and 143–193; these read MSAK…KLVM and IIDN…PKKK. Residues 13-26 are compositionally biased toward basic and acidic residues; it reads KRKESDASALDGRE. The span at 27–36 shows a compositional bias: basic residues; that stretch reads RKRAAKRKGL. The span at 40–54 shows a compositional bias: polar residues; sequence SRQQAEQSSKNNNGK. The segment covering 145–160 has biased composition (acidic residues); the sequence is DNDDDEEDDGSFDDAS. A compositionally biased stretch (basic and acidic residues) spans 184 to 193; it reads PEPKPEPKKK.

This sequence belongs to the YihI family. As to quaternary structure, interacts with Der.

Its function is as follows. A GTPase-activating protein (GAP) that modifies Der/EngA GTPase function. May play a role in ribosome biogenesis. The protein is Der GTPase-activating protein YihI of Aeromonas salmonicida (strain A449).